The chain runs to 156 residues: Transcriptional repressor NrdR (156 aa).

Residues 3–34 fold into a zinc finger; the sequence is CPFCGSMDTRVLDSRPTLDGAAIRRRRECISC. In terms of domain architecture, ATP-cone spans 49-139; sequence VLVIKKDGRR…VYRDFREVDQ (91 aa).

It belongs to the NrdR family. Zn(2+) is required as a cofactor.

In terms of biological role, negatively regulates transcription of bacterial ribonucleotide reductase nrd genes and operons by binding to NrdR-boxes. The protein is Transcriptional repressor NrdR of Thermotoga neapolitana (strain ATCC 49049 / DSM 4359 / NBRC 107923 / NS-E).